The sequence spans 99 residues: Aspartyl/glutamyl-tRNA(Asn/Gln) amidotransferase subunit C (99 aa).

The protein belongs to the GatC family. As to quaternary structure, heterotrimer of A, B and C subunits.

The enzyme catalyses L-glutamyl-tRNA(Gln) + L-glutamine + ATP + H2O = L-glutaminyl-tRNA(Gln) + L-glutamate + ADP + phosphate + H(+). It carries out the reaction L-aspartyl-tRNA(Asn) + L-glutamine + ATP + H2O = L-asparaginyl-tRNA(Asn) + L-glutamate + ADP + phosphate + 2 H(+). Functionally, allows the formation of correctly charged Asn-tRNA(Asn) or Gln-tRNA(Gln) through the transamidation of misacylated Asp-tRNA(Asn) or Glu-tRNA(Gln) in organisms which lack either or both of asparaginyl-tRNA or glutaminyl-tRNA synthetases. The reaction takes place in the presence of glutamine and ATP through an activated phospho-Asp-tRNA(Asn) or phospho-Glu-tRNA(Gln). This Polaromonas sp. (strain JS666 / ATCC BAA-500) protein is Aspartyl/glutamyl-tRNA(Asn/Gln) amidotransferase subunit C.